The chain runs to 207 residues: Uridine kinase (207 aa).

Residue 11 to 18 coordinates ATP; sequence GGSGSGKT.

Belongs to the uridine kinase family.

It is found in the cytoplasm. The catalysed reaction is uridine + ATP = UMP + ADP + H(+). The enzyme catalyses cytidine + ATP = CMP + ADP + H(+). The protein operates within pyrimidine metabolism; CTP biosynthesis via salvage pathway; CTP from cytidine: step 1/3. Its pathway is pyrimidine metabolism; UMP biosynthesis via salvage pathway; UMP from uridine: step 1/1. The chain is Uridine kinase from Staphylococcus epidermidis (strain ATCC 35984 / DSM 28319 / BCRC 17069 / CCUG 31568 / BM 3577 / RP62A).